The chain runs to 485 residues: Glutamyl-tRNA(Gln) amidotransferase subunit A (485 aa).

Catalysis depends on charge relay system residues K78 and S153. S177 acts as the Acyl-ester intermediate in catalysis.

The protein belongs to the amidase family. GatA subfamily. Heterotrimer of A, B and C subunits.

The enzyme catalyses L-glutamyl-tRNA(Gln) + L-glutamine + ATP + H2O = L-glutaminyl-tRNA(Gln) + L-glutamate + ADP + phosphate + H(+). Functionally, allows the formation of correctly charged Gln-tRNA(Gln) through the transamidation of misacylated Glu-tRNA(Gln) in organisms which lack glutaminyl-tRNA synthetase. The reaction takes place in the presence of glutamine and ATP through an activated gamma-phospho-Glu-tRNA(Gln). The polypeptide is Glutamyl-tRNA(Gln) amidotransferase subunit A (Lawsonia intracellularis (strain PHE/MN1-00)).